Consider the following 145-residue polypeptide: 3-hydroxyacyl-[acyl-carrier-protein] dehydratase FabZ (145 aa).

His-49 is a catalytic residue.

Belongs to the thioester dehydratase family. FabZ subfamily.

The protein localises to the cytoplasm. It catalyses the reaction a (3R)-hydroxyacyl-[ACP] = a (2E)-enoyl-[ACP] + H2O. Functionally, involved in unsaturated fatty acids biosynthesis. Catalyzes the dehydration of short chain beta-hydroxyacyl-ACPs and long chain saturated and unsaturated beta-hydroxyacyl-ACPs. This chain is 3-hydroxyacyl-[acyl-carrier-protein] dehydratase FabZ, found in Rickettsia felis (strain ATCC VR-1525 / URRWXCal2) (Rickettsia azadi).